The following is a 330-amino-acid chain: 2-methyl-6-phytyl-1,4-hydroquinone methyltransferase 1, chloroplastic (330 aa).

The N-terminal 45 residues, Met1 to Lys45, are a transit peptide targeting the chloroplast. The Chloroplast intermembrane segment spans residues Cys46 to Thr295. Positions Val107 to Phe116 are SAM motif I. Residues Val152–Pro165 are SAM motif II. The interval Arg193–Pro206 is SAM motif III. The chain crosses the membrane as a helical span at residues Phe296–Tyr316. The Stromal portion of the chain corresponds to Met317 to Ile330.

Belongs to the class I-like SAM-binding methyltransferase superfamily. MPBQ/MBSQ MT family.

Its subcellular location is the plastid. The protein resides in the chloroplast inner membrane. It carries out the reaction 2-methyl-6-phytyl-1,4-benzene-1,4-diol + S-adenosyl-L-methionine = 2,3-dimethyl-6-phytylbenzene-1,4-diol + S-adenosyl-L-homocysteine + H(+). The enzyme catalyses 2-methyl-6-(all-trans-nonaprenyl)benzene-1,4-diol + S-adenosyl-L-methionine = plastoquinol-9 + S-adenosyl-L-homocysteine + H(+). The catalysed reaction is 6-geranylgeranyl-2-methylbenzene-1,4-diol + S-adenosyl-L-methionine = 6-geranylgeranyl-2,3-dimethylbenzene-1,4-diol + S-adenosyl-L-homocysteine + H(+). Its pathway is cofactor biosynthesis; tocopherol biosynthesis. Functionally, involved in a key methylation step in both tocopherols (vitamin E) and plastoquinone synthesis. Catalyzes the conversion of 2-methyl-6-phytyl-1,4-hydroquinone (MPBQ) to 2,3-dimethyl-6-phytyl-1,4-hydroquinone (DMPQ, a substrate for tocopherol cyclase), and 2-methyl-6-solanyl-1,4-benzoquinone (MSBQ) to plastoquinone. This chain is 2-methyl-6-phytyl-1,4-hydroquinone methyltransferase 1, chloroplastic (ARSM2), found in Oryza sativa subsp. japonica (Rice).